Here is a 394-residue protein sequence, read N- to C-terminus: Phosphopentomutase (394 aa).

Mn(2+) is bound by residues Asp14, Asp287, His292, Asp328, His329, and His340.

Belongs to the phosphopentomutase family. It depends on Mn(2+) as a cofactor.

The protein localises to the cytoplasm. It catalyses the reaction 2-deoxy-alpha-D-ribose 1-phosphate = 2-deoxy-D-ribose 5-phosphate. It carries out the reaction alpha-D-ribose 1-phosphate = D-ribose 5-phosphate. It functions in the pathway carbohydrate degradation; 2-deoxy-D-ribose 1-phosphate degradation; D-glyceraldehyde 3-phosphate and acetaldehyde from 2-deoxy-alpha-D-ribose 1-phosphate: step 1/2. Functionally, isomerase that catalyzes the conversion of deoxy-ribose 1-phosphate (dRib-1-P) and ribose 1-phosphate (Rib-1-P) to deoxy-ribose 5-phosphate (dRib-5-P) and ribose 5-phosphate (Rib-5-P), respectively. This is Phosphopentomutase from Listeria welshimeri serovar 6b (strain ATCC 35897 / DSM 20650 / CCUG 15529 / CIP 8149 / NCTC 11857 / SLCC 5334 / V8).